Reading from the N-terminus, the 170-residue chain is Adenine phosphoribosyltransferase (170 aa).

This sequence belongs to the purine/pyrimidine phosphoribosyltransferase family. In terms of assembly, homodimer.

The protein localises to the cytoplasm. The enzyme catalyses AMP + diphosphate = 5-phospho-alpha-D-ribose 1-diphosphate + adenine. It functions in the pathway purine metabolism; AMP biosynthesis via salvage pathway; AMP from adenine: step 1/1. Functionally, catalyzes a salvage reaction resulting in the formation of AMP, that is energically less costly than de novo synthesis. This is Adenine phosphoribosyltransferase from Maridesulfovibrio salexigens (strain ATCC 14822 / DSM 2638 / NCIMB 8403 / VKM B-1763) (Desulfovibrio salexigens).